Here is a 123-residue protein sequence, read N- to C-terminus: MDLREVALVLIGGGTGAVARYYLSGVLPVYRSFPVGTLLVNSLASFLLGYLYGLIFWGLDVSRESRLFLGTGFCGGLSTFSTFSYETFSLIREGEYLTALLNIFANVLATIFLVFLGFVLARR.

Helical transmembrane passes span 6–26, 38–58, 68–88, and 100–120; these read VALV…LSGV, LLVN…IFWG, FLGT…YETF, and LLNI…GFVL. Na(+)-binding residues include Gly-75 and Ser-78.

It belongs to the fluoride channel Fluc/FEX (TC 1.A.43) family.

It localises to the cell membrane. It catalyses the reaction fluoride(in) = fluoride(out). With respect to regulation, na(+) is not transported, but it plays an essential structural role and its presence is essential for fluoride channel function. Fluoride-specific ion channel. Important for reducing fluoride concentration in the cell, thus reducing its toxicity. The chain is Fluoride-specific ion channel FluC from Pyrococcus furiosus (strain ATCC 43587 / DSM 3638 / JCM 8422 / Vc1).